The following is a 506-amino-acid chain: NAD(P)H-quinone oxidoreductase subunit 2 (506 aa).

The next 13 membrane-spanning stretches (helical) occupy residues 14–34 (AIIP…VDLA), 42–62 (WAPI…ALQW), 79–99 (LAIA…LISW), 108–128 (PIGE…LLCG), 132–152 (LISV…LSGY), 167–187 (LLVG…LYGL), 206–226 (FITS…IAAV), 240–260 (PTPV…AFAI), 276–296 (LLFT…ALAQ), 302–322 (MLAY…VSGT), 330–350 (VLYL…VILF), 374–394 (LGLS…GFFG), and 409–429 (LLVI…ISVI).

Belongs to the complex I subunit 2 family. NDH-1 can be composed of about 15 different subunits; different subcomplexes with different compositions have been identified which probably have different functions.

It localises to the cellular thylakoid membrane. It catalyses the reaction a plastoquinone + NADH + (n+1) H(+)(in) = a plastoquinol + NAD(+) + n H(+)(out). The catalysed reaction is a plastoquinone + NADPH + (n+1) H(+)(in) = a plastoquinol + NADP(+) + n H(+)(out). NDH-1 shuttles electrons from an unknown electron donor, via FMN and iron-sulfur (Fe-S) centers, to quinones in the respiratory and/or the photosynthetic chain. The immediate electron acceptor for the enzyme in this species is believed to be plastoquinone. Couples the redox reaction to proton translocation, and thus conserves the redox energy in a proton gradient. Cyanobacterial NDH-1 also plays a role in inorganic carbon-concentration. This is NAD(P)H-quinone oxidoreductase subunit 2 from Prochlorococcus marinus (strain AS9601).